The chain runs to 530 residues: MDFKYSDTVIHNGVVFYITDGGHRVYFLYGGCLLSVPRPHATAESGEIAKFGLTLRGLTHNDRVVANYVRSELNRTGRHESAPSSEEDVFVDRLEVLAQGAQAFGRDICGSFDLEVYDPYLAECMVSLKVTSGLIVSTGRDIPQDGMLHLYTVPTITNASSGFIYTPNIACFTLVQAYLTELPPELETLISGLFDRIPVARPPLRDESGGHSRTDIIVTSPRAVKTMAIGGTTRCSKRPLRKTVVSDFVQVRLIPKPCSIWDSASRVASGASLQSLQLLFKIADEIILIEEPWPGLDEHLNQARSTIVDAILAVYGNEGKLRFFGGKLTQQGVTTLQRFVLCQFILGKWNLINCYAALEQLAESYIGAVPEARDPLPDPHLVADAVNEIIRESGILGELCEIIVRYTQPTDPVNGSGSEVVELEARLLAEFAANATRVELGLSSYDEVRNMEARIASVLNKLYAKDGIGGAAQVACRILGSGLPVAIVLNVSSITAFDGLDLSRKGAYYLYYLLSERLKRGGVTVHVSRK.

This sequence belongs to the alphaherpesvirinae UL21 protein family. Interacts (via C-terminus) with UL16.

The protein resides in the virion tegument. It is found in the host cytoplasm. The protein localises to the host nucleus. In terms of biological role, may participate in DNA packaging/capsid maturation events. Promotes efficient incorporation of tegument proteins UL46, UL49, and US3 homologs into virions. May also play a role in capsid transport to the trans-Golgi network (TGN). This chain is Tegument protein UL21 homolog, found in Equus caballus (Horse).